The sequence spans 449 residues: MTNEYWQGVDQIKYIGHQDKKSGLGFQYYNPDEVIGGKKMRDWLRFSVAYWHTFDQRLVDPFGDGTAQRPYDHITDPMDLALAKVDAAFEFYHKLGVDYLCFHDRDLAPEGDTLRETNRNLDKVIDKIVDYQKQTGMKVLWNTSNMFTNPRFVAGAATSPDADVFAYAAAQLKHSLEIGKRVGAENYVFWGGREGYESLWNTNMKLEQEHAAKFFHMAKDYANEIGFDAQMLLEPKPKEPSTHQYDFDAATTIAFMKEYDLDKDFKLNLEGNHANLAGHTYQHEIRVAREANLLGSLDANQGDKLIGWDIDEFPSDLYEATAAMYEVVENGSIGPRGGLNFDAKPRRSSFAANDLFYGHIVGIDTFAAGLRVALKMKQDGFLEKLVADRYSSYQSGVGAEIEAGTADFKSLESYAIDKPQSELIAATSSDPLEEVKDTINHYIIETLSK.

Residues His-103 and Asp-106 contribute to the active site. The Mg(2+) site is built by Glu-234, Glu-270, His-273, Asp-298, Asp-309, Asp-311, and Asp-342.

The protein belongs to the xylose isomerase family. Homotetramer. Mg(2+) serves as cofactor.

The protein localises to the cytoplasm. The catalysed reaction is alpha-D-xylose = alpha-D-xylulofuranose. Functionally, involved in D-xylose catabolism. This is Xylose isomerase (xylA) from Lactiplantibacillus pentosus (Lactobacillus pentosus).